Reading from the N-terminus, the 347-residue chain is Olfactory receptor 2M2 (347 aa).

Over 1–25 (MAWENQTFNSDFILLGIFNHSPPHT) the chain is Extracellular. N-linked (GlcNAc...) asparagine glycosylation is present at N5. Residues 26 to 49 (FLFFLVLGIFLVAFMGNSVMVLLI) form a helical membrane-spanning segment. Residues 50–57 (YLDTQLHT) are Cytoplasmic-facing. Residues 58-79 (PMYFLLSQLSLMDLMLICTTVP) form a helical membrane-spanning segment. Residues 80-100 (KMAFNYLSGSKSISMAGCVTQ) lie on the Extracellular side of the membrane. Cysteines 97 and 189 form a disulfide. Residues 101-120 (IFFYISLSGSECFLLAVMAY) form a helical membrane-spanning segment. At 121 to 139 (DRYIAICHPLRYTNLMNPK) the chain is on the cytoplasmic side. A helical transmembrane segment spans residues 140–158 (ICGLMATFSWILGSTDGII). The Extracellular segment spans residues 159–195 (DAVATFSFSFCGSREIAHFFCEFPSLLILSCNDTSIF). Residue N190 is glycosylated (N-linked (GlcNAc...) asparagine). The chain crosses the membrane as a helical span at residues 196 to 219 (EEVIFICCIVMLVFPVAIIIASYA). Topologically, residues 220-236 (RVILAVIHMGSGEGRCK) are cytoplasmic. The helical transmembrane segment at 237–259 (AFTTCSSHLMVVGMYYGAALFMY) threads the bilayer. The Extracellular portion of the chain corresponds to 260 to 272 (IRPTSDHSPTQDK). The chain crosses the membrane as a helical span at residues 273-292 (MVSVFYTILTPMLNPLIYSL). At 293–347 (RNKEVTRAFMKILGKGKSESELPHKLYVLLFAKFFFLISIFFYDVKILALIMYIA) the chain is on the cytoplasmic side.

This sequence belongs to the G-protein coupled receptor 1 family.

It localises to the cell membrane. Odorant receptor. In Homo sapiens (Human), this protein is Olfactory receptor 2M2 (OR2M2).